The sequence spans 560 residues: MFS-type transporter pgmG (560 aa).

The interval 1–32 (MSETVTQTETDQRPATARSLGAEEKEAKSDEQ) is disordered. A compositionally biased stretch (basic and acidic residues) spans 21–31 (GAEEKEAKSDE). The next 8 membrane-spanning stretches (helical) occupy residues 45-65 (FIVI…NTIV), 84-104 (WLSV…SKIY), 111-131 (WLYL…GAAP), 141-161 (ALAG…LSVN), 174-194 (TGLT…GFAV), 201-221 (WSFY…LFML), 242-262 (LGTI…NFGG), and 275-295 (CFVV…YCIG). Residue Asn300 is glycosylated (N-linked (GlcNAc...) asparagine). Residues 313–333 (FIILFVQTASVATVFFVPIYF) traverse the membrane as a helical segment. Residue Asn343 is glycosylated (N-linked (GlcNAc...) asparagine). The next 5 helical transmembrane spans lie at 346–366 (AIDA…AMIL), 378–398 (MPWY…MYTI), 409–429 (GYMI…FAVA), 440–460 (VATG…LAIA), and 515–535 (ISQV…LAIF).

Belongs to the major facilitator superfamily. TCR/Tet family.

The protein localises to the membrane. Functionally, MFS-type transporter; part of the gene cluster that mediates the biosynthesis of pleosporalin A, ascomycone A, as well as a third cryptic naphthoquinone derived pigment, all responsible for the coloration of conidia. Seems not to be involved in pigment biosynthesis although its expression is regulated by the cluster-specific transcription factor pgmR. This Aspergillus terreus protein is MFS-type transporter pgmG.